The primary structure comprises 99 residues: Putative membrane protein insertion efficiency factor (99 aa).

It belongs to the UPF0161 family.

It localises to the cell inner membrane. Functionally, could be involved in insertion of integral membrane proteins into the membrane. The polypeptide is Putative membrane protein insertion efficiency factor (Salinibacter ruber (strain DSM 13855 / M31)).